Here is a 574-residue protein sequence, read N- to C-terminus: K(+)/H(+) antiporter NhaP2 (574 aa).

Helical transmembrane passes span 6–26, 34–54, 58–78, 87–107, 109–129, 173–193, 196–216, 219–239, 242–262, 271–291, 299–319, 335–355, and 359–379; these read INSF…LSPV, ILLI…GGIL, YSTA…DGGM, VALW…TSIT, VMAA…GAIV, IAIL…ISFI, FGLG…LVNL, LAEG…YAAS, LGGS…NKPT, VLDG…GLLL, IWLP…PLAV, WFIS…VFPM, and LPGA…SLLV. The 82-residue stretch at 405-486 folds into the RCK C-terminal domain; that stretch reads SGVEIYPSSE…LEALSNLFSQ (82 aa).

This sequence belongs to the monovalent cation:proton antiporter 1 (CPA1) transporter (TC 2.A.36) family. NhaP2 subfamily.

Its subcellular location is the cell inner membrane. The enzyme catalyses K(+)(in) + H(+)(out) = K(+)(out) + H(+)(in). K(+)/H(+) antiporter that extrudes potassium in exchange for external protons and maintains the internal concentration of potassium under toxic levels. The sequence is that of K(+)/H(+) antiporter NhaP2 from Shewanella sp. (strain ANA-3).